We begin with the raw amino-acid sequence, 1108 residues long: Folliculin-interacting protein 2 (1108 aa).

One can recognise a uDENN FNIP1/2-type domain in the interval 38 to 456 (FGLSDIRLLV…TVMPVDHPPI (419 aa)). 4 disordered regions span residues 89–112 (QESS…GGSL), 209–233 (RTGS…DRDS), 598–635 (SEGV…AEPD), and 649–671 (QNDQ…PRVR). Residues 91–106 (SSSSSGSSSSGSSSSH) are compositionally biased toward low complexity. 2 positions are modified to phosphoserine: serine 212 and serine 217. Residues 464–1034 (TSQSVNMLAK…VSSLLQSILQ (571 aa)) enclose the cDENN FNIP1/2-type domain. Residues 540-905 (DDQVINGSKI…DEACVLALLE (366 aa)) are interaction with PRKAA1. Positions 606–620 (LGHKPEKNRCKRPEQ) are enriched in basic and acidic residues. A compositionally biased stretch (polar residues) spans 652–663 (QEATQDCSSSPP). Phosphoserine occurs at positions 720, 721, and 723. The region spanning 1044-1099 (FCIMHLEDRLQEMYLKSKMLSEYLRGHTRVHVKELSVVLGIESNDLPLLTAIASTH) is the dDENN FNIP1/2-type domain.

It belongs to the FNIP family. As to quaternary structure, homodimer and homomultimer. Heterodimer and heteromultimer with FNIP1. Interacts (via C-terminus) with FLCN (via C-terminus). Phosphorylated FLCN is preferentially bound. Component of the lysosomal folliculin complex (LFC), composed of FLCN, FNIP1 (or FNIP2), RagA/RRAGA or RagB/RRAGB GDP-bound, RagC/RRAGC or RagD/RRAGD GTP-bound, and Ragulator. Interacts with PRKAA1, PRKAB1 and PRKAG1 subunits of 5'-AMP-activated protein kinase. Interacts with HSP70, HSP90AA1, STIP1, PTGES3, CDC37, BRAF, GCR and CDK4. Phosphorylated by AMPK.

Its subcellular location is the lysosome membrane. The protein resides in the cytoplasm. Its function is as follows. Binding partner of the GTPase-activating protein FLCN: involved in the cellular response to amino acid availability by regulating the non-canonical mTORC1 signaling cascade controlling the MiT/TFE factors TFEB and TFE3. Required to promote FLCN recruitment to lysosomes and interaction with Rag GTPases, leading to activation of the non-canonical mTORC1 signaling. In low-amino acid conditions, component of the lysosomal folliculin complex (LFC) on the membrane of lysosomes, which inhibits the GTPase-activating activity of FLCN, thereby inactivating mTORC1 and promoting nuclear translocation of TFEB and TFE3. Upon amino acid restimulation, disassembly of the LFC complex liberates the GTPase-activating activity of FLCN, leading to activation of mTORC1 and subsequent inactivation of TFEB and TFE3. Together with FLCN, regulates autophagy: following phosphorylation by ULK1, interacts with GABARAP and promotes autophagy. In addition to its role in mTORC1 signaling, also acts as a co-chaperone of HSP90AA1/Hsp90: inhibits the ATPase activity of HSP90AA1/Hsp90, leading to activate both kinase and non-kinase client proteins of HSP90AA1/Hsp90. Acts as a scaffold to load client protein FLCN onto HSP90AA1/Hsp90. Competes with the activating co-chaperone AHSA1 for binding to HSP90AA1, thereby providing a reciprocal regulatory mechanism for chaperoning of client proteins. May play a role in the signal transduction pathway of apoptosis induced by O6-methylguanine-mispaired lesions. The sequence is that of Folliculin-interacting protein 2 from Mus musculus (Mouse).